Here is a 207-residue protein sequence, read N- to C-terminus: MAEVAPAPAAAAPAKAPKKKAAAKPKKAGPSVGELIVKAVSASKERSGVSLAALKKSLAAGGYDVEKNNSRVKIAVKSLVTKGTLVQTKGTGASGSFKLNKKAVEAKKPAKKAAAPKAKKVAAKKPAAAKKPKKVAAKKAVAAKKSPKKAKKPATPKKAAKSPKKVKKPAAAAKKAAKSPKKATKAAKPKAAKPKAAKAKKAAPKKK.

The segment covering 1–15 (MAEVAPAPAAAAPAK) has biased composition (low complexity). Disordered stretches follow at residues 1 to 28 (MAEV…PKKA) and 105 to 207 (EAKK…PKKK). Ala-2 bears the N-acetylalanine mark. Residues 16–27 (APKKKAAAKPKK) are compositionally biased toward basic residues. In terms of domain architecture, H15 spans 28–101 (AGPSVGELIV…GASGSFKLNK (74 aa)). Basic residues-rich tracts occupy residues 117–168 (KAKK…KVKK) and 175–207 (KAAK…PKKK).

It belongs to the histone H1/H5 family. Oncorhyncin II is expressed in skin.

The protein localises to the nucleus. Its subcellular location is the chromosome. It localises to the secreted. Functionally, histones H1 are necessary for the condensation of nucleosome chains into higher-order structures. Its function is as follows. Oncorhyncin II has antibacterial activity against Gram-positive and Gram-negative bacteria at submicromolar concentrations. Potentially important role in mucosal defense. This is Histone H1 from Oncorhynchus mykiss (Rainbow trout).